Here is a 401-residue protein sequence, read N- to C-terminus: Argininosuccinate synthase (401 aa).

Position 8 to 16 (8 to 16) interacts with ATP; sequence AYSGGLDTS. Y87 provides a ligand contact to L-citrulline. G117 lines the ATP pocket. L-aspartate-binding residues include T119, N123, and D124. N123 is an L-citrulline binding site. The L-citrulline site is built by R127, S175, E259, and Y271.

This sequence belongs to the argininosuccinate synthase family. Type 1 subfamily. As to quaternary structure, homotetramer.

The protein localises to the cytoplasm. The catalysed reaction is L-citrulline + L-aspartate + ATP = 2-(N(omega)-L-arginino)succinate + AMP + diphosphate + H(+). The protein operates within amino-acid biosynthesis; L-arginine biosynthesis; L-arginine from L-ornithine and carbamoyl phosphate: step 2/3. This is Argininosuccinate synthase from Paenarthrobacter aurescens (strain TC1).